The sequence spans 804 residues: Protein SEY1 homolog 1 (804 aa).

Over 1–638 the chain is Cytoplasmic; it reads MEQIITGEGQ…SVLASQNNEH (638 aa). Residues 28–245 enclose the GB1/RHD3-type G domain; that stretch reads GTDYHMVSII…EENYLFKEKS (218 aa). 38 to 45 serves as a coordination point for GTP; that stretch reads GCQSSGKS. Residues 639–659 form a helical membrane-spanning segment; the sequence is IPPWAWFLFLFSCSDYILWWL. Over 660-662 the chain is Lumenal; the sequence is SNP. The chain crosses the membrane as a helical span at residues 663–683; that stretch reads LLFSLTVLFGGTYLVLNQLGL. At 684 to 804 the chain is on the cytoplasmic side; it reads WDTAVQKLLD…RKRVRVGTLV (121 aa). Residues 706 to 804 form a disordered region; that stretch reads PDENNETETN…RKRVRVGTLV (99 aa). The segment covering 751–791 has biased composition (polar residues); that stretch reads QGLTKTESNVTFANVSNANDEQSLTKNNTEDSLNTGSSSSG. Residues 792–804 are compositionally biased toward basic residues; the sequence is QRHRKRVRVGTLV.

This sequence belongs to the TRAFAC class dynamin-like GTPase superfamily. GB1/RHD3 GTPase family. RHD3 subfamily.

The protein resides in the endoplasmic reticulum membrane. In terms of biological role, probable GTP-binding protein that may be involved in cell development. The sequence is that of Protein SEY1 homolog 1 from Trichomonas vaginalis (strain ATCC PRA-98 / G3).